The sequence spans 317 residues: Endochitinase 3 (317 aa).

Positions 1–19 (MFVRNALVVTGLLAALTQA) are cleaved as a signal peptide. N-linked (GlcNAc...) asparagine glycosylation is found at N25, N49, and N169. Residues 29 to 317 (HKLTVYWGAE…NYQKEIKANL (289 aa)) form the GH18 domain. E170 serves as the catalytic Proton donor. An N-linked (GlcNAc...) asparagine glycan is attached at N245.

The protein belongs to the glycosyl hydrolase 18 family. Chitinase class III subfamily.

It localises to the secreted. It carries out the reaction Random endo-hydrolysis of N-acetyl-beta-D-glucosaminide (1-&gt;4)-beta-linkages in chitin and chitodextrins.. Secreted chitinase involved in the degradation of chitin, a component of the cell walls of fungi and exoskeletal elements of some animals (including worms and arthropods). Participates in the infection process and directly acts in the penetration process of the host cuticle. Involved in heat-shock adaptation. The protein is Endochitinase 3 (chi3) of Metarhizium robertsii (strain ARSEF 23 / ATCC MYA-3075) (Metarhizium anisopliae (strain ARSEF 23)).